A 360-amino-acid polypeptide reads, in one-letter code: Type II methyltransferase M2.ScrFI (360 aa).

The SAM-dependent MTase C5-type domain maps to 2–360 (LRVFEAFAGY…SLFKELFKSQ (359 aa)). Residue C127 is part of the active site.

Belongs to the class I-like SAM-binding methyltransferase superfamily. C5-methyltransferase family.

It carries out the reaction a 2'-deoxycytidine in DNA + S-adenosyl-L-methionine = a 5-methyl-2'-deoxycytidine in DNA + S-adenosyl-L-homocysteine + H(+). A methylase, recognizes the double-stranded sequence 5'-CCNGG-3', methylates C-2 on both strands, and protects the DNA from cleavage by the ScrFI endonuclease. This Lactococcus lactis subsp. cremoris (Streptococcus cremoris) protein is Type II methyltransferase M2.ScrFI (scrFIBM).